The following is a 98-amino-acid chain: Lipolysis-activating peptide 1-alpha chain (98 aa).

An N-terminal signal peptide occupies residues 1–22 (MMKFVLFGMIVILFSLMGSIRG). Residues 26-89 (PGNYPTNAYG…IWNAVKNHCT (64 aa)) enclose the LCN-type CS-alpha/beta domain. Cystine bridges form between Cys-40/Cys-63, Cys-49/Cys-68, and Cys-53/Cys-70. The residue at position 96 (Asn-96) is an Asparagine amide.

The protein belongs to the long (3 C-C) scorpion toxin superfamily. In terms of assembly, monomer (edited version) and heterodimer (non-edited version) of this alpha chain and a beta chain (AC Q95P90). Expressed by the venom gland.

Its subcellular location is the secreted. Functionally, the heterodimer non-edited LVP1 induces lipolysis in rat adipocytes. Induction of lipolysis by LVP1 appears to be mediated through the beta-2 adrenergic receptor pathway (ADRB2). Its function is as follows. The edited BmKBTx, similar to beta-toxins, may modulate voltage-gated sodium channels (Nav) and may block voltage-gated potassium channels (Kv). Seems to be a rare component in the venom. This Olivierus martensii (Manchurian scorpion) protein is Lipolysis-activating peptide 1-alpha chain (LVP1a).